Reading from the N-terminus, the 487-residue chain is Probable glycine dehydrogenase (decarboxylating) subunit 2 (487 aa).

Lysine 269 carries the post-translational modification N6-(pyridoxal phosphate)lysine.

Belongs to the GcvP family. C-terminal subunit subfamily. As to quaternary structure, the glycine cleavage system is composed of four proteins: P, T, L and H. In this organism, the P 'protein' is a heterodimer of two subunits. It depends on pyridoxal 5'-phosphate as a cofactor.

It carries out the reaction N(6)-[(R)-lipoyl]-L-lysyl-[glycine-cleavage complex H protein] + glycine + H(+) = N(6)-[(R)-S(8)-aminomethyldihydrolipoyl]-L-lysyl-[glycine-cleavage complex H protein] + CO2. Its function is as follows. The glycine cleavage system catalyzes the degradation of glycine. The P protein binds the alpha-amino group of glycine through its pyridoxal phosphate cofactor; CO(2) is released and the remaining methylamine moiety is then transferred to the lipoamide cofactor of the H protein. This Prosthecochloris aestuarii (strain DSM 271 / SK 413) protein is Probable glycine dehydrogenase (decarboxylating) subunit 2.